Consider the following 375-residue polypeptide: tRNA-specific 2-thiouridylase MnmA (375 aa).

Residues 16-23 (GMSGGVDS) and methionine 42 contribute to the ATP site. The interval 102–104 (NPD) is interaction with target base in tRNA. Residue cysteine 107 is the Nucleophile of the active site. An intrachain disulfide couples cysteine 107 to cysteine 203. ATP is bound at residue glycine 131. An interaction with tRNA region spans residues 153-155 (KDQ). Residue cysteine 203 is the Cysteine persulfide intermediate of the active site. The segment at 315-316 (RY) is interaction with tRNA.

Belongs to the MnmA/TRMU family.

The protein localises to the cytoplasm. The catalysed reaction is S-sulfanyl-L-cysteinyl-[protein] + uridine(34) in tRNA + AH2 + ATP = 2-thiouridine(34) in tRNA + L-cysteinyl-[protein] + A + AMP + diphosphate + H(+). Its function is as follows. Catalyzes the 2-thiolation of uridine at the wobble position (U34) of tRNA, leading to the formation of s(2)U34. The sequence is that of tRNA-specific 2-thiouridylase MnmA from Pseudomonas paraeruginosa (strain DSM 24068 / PA7) (Pseudomonas aeruginosa (strain PA7)).